Here is a 298-residue protein sequence, read N- to C-terminus: Beta-soluble NSF attachment protein (298 aa).

Belongs to the SNAP family. Interacts with PRKCABP, and disrupts the interaction between GRIA2 and PRKCABP, leading to the internalization of GRIA2.

Its subcellular location is the membrane. Required for vesicular transport between the endoplasmic reticulum and the Golgi apparatus. The sequence is that of Beta-soluble NSF attachment protein (NAPB) from Homo sapiens (Human).